The sequence spans 162 residues: Small ribosomal subunit protein uS9 (162 aa).

The protein belongs to the universal ribosomal protein uS9 family.

The chain is Small ribosomal subunit protein uS9 from Methylobacterium nodulans (strain LMG 21967 / CNCM I-2342 / ORS 2060).